The sequence spans 72 residues: Putative membrane protein insertion efficiency factor (72 aa).

This sequence belongs to the UPF0161 family.

The protein resides in the cell inner membrane. Functionally, could be involved in insertion of integral membrane proteins into the membrane. In Amoebophilus asiaticus (strain 5a2), this protein is Putative membrane protein insertion efficiency factor.